The sequence spans 78 residues: Small ribosomal subunit protein uS15 (78 aa).

This sequence belongs to the universal ribosomal protein uS15 family. In terms of assembly, part of the 30S ribosomal subunit. Forms a bridge to the 50S subunit in the 70S ribosome, contacting the 23S rRNA.

One of the primary rRNA binding proteins, it binds directly to 16S rRNA where it helps nucleate assembly of the platform of the 30S subunit by binding and bridging several RNA helices of the 16S rRNA. Functionally, forms an intersubunit bridge (bridge B4) with the 23S rRNA of the 50S subunit in the ribosome. This chain is Small ribosomal subunit protein uS15, found in Karelsulcia muelleri (strain GWSS) (Sulcia muelleri).